The primary structure comprises 41 residues: Ostricacin-2 (41 aa).

Cystine bridges form between C8–C36, C15–C30, and C20–C37.

It is found in the secreted. Has antibacterial activity against the Gram-positive bacterium S.aureus 1056 MRSA (MIC=1.25 ug/ml) and the Gram-negative bacterium E.coli O157:H7 (MIC=0.96 ug/ml). Has antifungal activity against the yeast C.albicans 3153A (MIC=6.20 ug/ml). The chain is Ostricacin-2 from Struthio camelus (Common ostrich).